The sequence spans 266 residues: Elongation factor Ts (266 aa).

The tract at residues 80-83 (TDFV) is involved in Mg(2+) ion dislocation from EF-Tu.

It belongs to the EF-Ts family.

The protein resides in the cytoplasm. Associates with the EF-Tu.GDP complex and induces the exchange of GDP to GTP. It remains bound to the aminoacyl-tRNA.EF-Tu.GTP complex up to the GTP hydrolysis stage on the ribosome. This is Elongation factor Ts from Buchnera aphidicola subsp. Baizongia pistaciae (strain Bp).